The chain runs to 348 residues: Selenide, water dikinase (348 aa).

The active site involves cysteine 17. ATP-binding positions include lysine 20 and 48 to 50; that span reads TSD. Aspartate 51 is a binding site for Mg(2+). Residues aspartate 68, aspartate 91, and 139–141 contribute to the ATP site; that span reads GHT. Aspartate 91 contributes to the Mg(2+) binding site. Residue aspartate 227 coordinates Mg(2+).

It belongs to the selenophosphate synthase 1 family. Class I subfamily. In terms of assembly, homodimer. The cofactor is Mg(2+).

The enzyme catalyses hydrogenselenide + ATP + H2O = selenophosphate + AMP + phosphate + 2 H(+). Its function is as follows. Synthesizes selenophosphate from selenide and ATP. This chain is Selenide, water dikinase, found in Dechloromonas aromatica (strain RCB).